Here is a 489-residue protein sequence, read N- to C-terminus: Probable serine protease EDA2 (489 aa).

Positions Met-1 to Ala-25 are cleaved as a signal peptide. Asn-35, Asn-51, and Asn-162 each carry an N-linked (GlcNAc...) asparagine glycan. The active-site Charge relay system is Ser-178. Asn-253, Asn-293, Asn-365, and Asn-406 each carry an N-linked (GlcNAc...) asparagine glycan. Asp-410 serves as the catalytic Charge relay system. N-linked (GlcNAc...) asparagine glycosylation is present at Asn-419. The active-site Charge relay system is the His-436. The N-linked (GlcNAc...) asparagine glycan is linked to Asn-456.

It belongs to the peptidase S28 family.

It localises to the secreted. In terms of biological role, may be involved in a proteolytic pathway controlling the nuclear division phase of megagametogenesis. The sequence is that of Probable serine protease EDA2 (EDA2) from Arabidopsis thaliana (Mouse-ear cress).